Here is a 261-residue protein sequence, read N- to C-terminus: Transcription factor BEE 3 (261 aa).

The segment covering 72–82 (NIQNNEESSSQ) has biased composition (low complexity). Disordered regions lie at residues 72–158 (NIQN…TDSH) and 242–261 (VEMGQGRDGSSVFHSSSWTL). The span at 95–123 (VSTSENSVSDQTLSTSSAQVSINGNISTK) shows a compositional bias: polar residues. Residues 135–146 (NREEEKEREVVH) show a composition bias toward basic and acidic residues. In terms of domain architecture, bHLH spans 153-203 (QATDSHSIAERVRRGKINERLKCLQDIVPGCYKTMGMATMLDEIINYVQSL).

Homodimer. Expressed in stems.

It is found in the nucleus. In terms of biological role, positive regulator of brassinosteroid signaling. The polypeptide is Transcription factor BEE 3 (BEE3) (Arabidopsis thaliana (Mouse-ear cress)).